Here is a 506-residue protein sequence, read N- to C-terminus: Glutamate--tRNA ligase (506 aa).

The short motif at 23 to 33 (PSPTGTPHVGL) is the 'HIGH' region element. The 'KMSKS' region signature appears at 267 to 271 (KLSKR). Lys270 is a binding site for ATP.

This sequence belongs to the class-I aminoacyl-tRNA synthetase family. Glutamate--tRNA ligase type 1 subfamily. In terms of assembly, monomer.

Its subcellular location is the cytoplasm. The catalysed reaction is tRNA(Glu) + L-glutamate + ATP = L-glutamyl-tRNA(Glu) + AMP + diphosphate. Its function is as follows. Catalyzes the attachment of glutamate to tRNA(Glu) in a two-step reaction: glutamate is first activated by ATP to form Glu-AMP and then transferred to the acceptor end of tRNA(Glu). The polypeptide is Glutamate--tRNA ligase (Clavibacter sepedonicus (Clavibacter michiganensis subsp. sepedonicus)).